The sequence spans 247 residues: Probable transcriptional regulatory protein BT_0627 (247 aa).

This sequence belongs to the TACO1 family.

The protein localises to the cytoplasm. The sequence is that of Probable transcriptional regulatory protein BT_0627 from Bacteroides thetaiotaomicron (strain ATCC 29148 / DSM 2079 / JCM 5827 / CCUG 10774 / NCTC 10582 / VPI-5482 / E50).